Consider the following 92-residue polypeptide: Cytochrome c2 (92 aa).

Heme c-binding residues include Cys-12, Cys-15, His-16, and Met-66.

Belongs to the cytochrome c family. Binds 1 heme c group covalently per subunit.

In terms of biological role, cytochrome c2 is found mainly in purple, non-sulfur, photosynthetic bacteria where it functions as the electron donor to the oxidized bacteriochlorophyll in the photophosphorylation pathway. However, it may also have a role in the respiratory chain and is found in some non-photosynthetic bacteria. This chain is Cytochrome c2, found in Rhodocyclus tenuis (Rhodospirillum tenue).